The sequence spans 324 residues: MATH domain and coiled-coil domain-containing protein At3g44790 (324 aa).

One can recognise an MATH domain in the interval tyrosine 3–valine 125. Residues phenylalanine 241 to serine 309 adopt a coiled-coil conformation.

This chain is MATH domain and coiled-coil domain-containing protein At3g44790, found in Arabidopsis thaliana (Mouse-ear cress).